The chain runs to 177 residues: Anti-apoptotic protein NR13 (177 aa).

The short motif at 75-94 (LEAEGGLNWGRLLALVVFTG) is the BH1 element. Residues 86-106 (LLALVVFTGTLAAALAESGCE) traverse the membrane as a helical segment. A BH2 motif is present at residues 126 to 141 (EWLEEHGGWDGFCRFF). The chain crosses the membrane as a helical span at residues 156 to 176 (SNAIMAAAGFGIAGLAFLLVV).

The protein belongs to the Bcl-2 family. As to quaternary structure, interacts with BAX. Expressed preferentially in heart, skeletal muscle, retina, optical tectum and bursa of Fabricius.

Its subcellular location is the cell membrane. In terms of biological role, shows anti-apoptotic properties. Counteract the pro-apoptotic activity of BAX. This Gallus gallus (Chicken) protein is Anti-apoptotic protein NR13 (NR13).